We begin with the raw amino-acid sequence, 205 residues long: Peptidyl-tRNA hydrolase (205 aa).

Position 18 (Tyr18) interacts with tRNA. Catalysis depends on His23, which acts as the Proton acceptor. Positions 69, 71, and 117 each coordinate tRNA.

This sequence belongs to the PTH family. In terms of assembly, monomer.

The protein localises to the cytoplasm. The catalysed reaction is an N-acyl-L-alpha-aminoacyl-tRNA + H2O = an N-acyl-L-amino acid + a tRNA + H(+). Functionally, hydrolyzes ribosome-free peptidyl-tRNAs (with 1 or more amino acids incorporated), which drop off the ribosome during protein synthesis, or as a result of ribosome stalling. Its function is as follows. Catalyzes the release of premature peptidyl moieties from peptidyl-tRNA molecules trapped in stalled 50S ribosomal subunits, and thus maintains levels of free tRNAs and 50S ribosomes. This Thermosynechococcus vestitus (strain NIES-2133 / IAM M-273 / BP-1) protein is Peptidyl-tRNA hydrolase.